Here is a 94-residue protein sequence, read N- to C-terminus: ESAT-6-like protein EsxI (94 aa).

It belongs to the WXG100 family. ESAT-6 subfamily.

It is found in the secreted. The protein is ESAT-6-like protein EsxI of Mycobacterium tuberculosis (strain CDC 1551 / Oshkosh).